We begin with the raw amino-acid sequence, 413 residues long: ATP-dependent RNA helicase RhlB (413 aa).

The Q motif signature appears at 9–37 (QRFADLPLHPQILAALNDQNFEYCTPIQA). In terms of domain architecture, Helicase ATP-binding spans 40 to 217 (LPLTLQGKDV…FEDMNDPEYI (178 aa)). ATP is bound at residue 53–60 (AQTGTGKT). A DEAD box motif is present at residues 163 to 166 (DEAD). The region spanning 241–388 (KMALLMTLLE…VSQYDPDSLI (148 aa)) is the Helicase C-terminal domain.

This sequence belongs to the DEAD box helicase family. RhlB subfamily. Component of the RNA degradosome, which is a multiprotein complex involved in RNA processing and mRNA degradation.

The protein localises to the cytoplasm. It catalyses the reaction ATP + H2O = ADP + phosphate + H(+). Its function is as follows. DEAD-box RNA helicase involved in RNA degradation. Has RNA-dependent ATPase activity and unwinds double-stranded RNA. The sequence is that of ATP-dependent RNA helicase RhlB from Actinobacillus succinogenes (strain ATCC 55618 / DSM 22257 / CCUG 43843 / 130Z).